Reading from the N-terminus, the 138-residue chain is Fluoride-specific ion channel FluC (138 aa).

The next 4 helical transmembrane spans lie at Phe-34–Ala-54, Met-60–Met-80, Phe-88–Val-108, and Leu-112–Met-132. Na(+) is bound by residues Gly-95 and Thr-98.

This sequence belongs to the fluoride channel Fluc/FEX (TC 1.A.43) family.

The protein resides in the cell membrane. It catalyses the reaction fluoride(in) = fluoride(out). With respect to regulation, na(+) is not transported, but it plays an essential structural role and its presence is essential for fluoride channel function. Fluoride-specific ion channel. Important for reducing fluoride concentration in the cell, thus reducing its toxicity. The polypeptide is Fluoride-specific ion channel FluC (Corynebacterium efficiens (strain DSM 44549 / YS-314 / AJ 12310 / JCM 11189 / NBRC 100395)).